A 630-amino-acid polypeptide reads, in one-letter code: 1-deoxy-D-xylulose-5-phosphate synthase (630 aa).

Thiamine diphosphate is bound by residues His-87 and 128–130 (GHS). Asp-159 provides a ligand contact to Mg(2+). Residues 160–161 (GA), Asn-188, Phe-295, and Glu-377 each bind thiamine diphosphate. Residue Asn-188 participates in Mg(2+) binding.

This sequence belongs to the transketolase family. DXPS subfamily. In terms of assembly, homodimer. Requires Mg(2+) as cofactor. Thiamine diphosphate is required as a cofactor.

It carries out the reaction D-glyceraldehyde 3-phosphate + pyruvate + H(+) = 1-deoxy-D-xylulose 5-phosphate + CO2. Its pathway is metabolic intermediate biosynthesis; 1-deoxy-D-xylulose 5-phosphate biosynthesis; 1-deoxy-D-xylulose 5-phosphate from D-glyceraldehyde 3-phosphate and pyruvate: step 1/1. Functionally, catalyzes the acyloin condensation reaction between C atoms 2 and 3 of pyruvate and glyceraldehyde 3-phosphate to yield 1-deoxy-D-xylulose-5-phosphate (DXP). The protein is 1-deoxy-D-xylulose-5-phosphate synthase of Pseudomonas syringae pv. syringae (strain B728a).